Here is a 296-residue protein sequence, read N- to C-terminus: MQINLITGISGSGKSVALRAFEDAGYDCVDNLPVSLLENLIQTLEGENSERVAVAIDARRGQSIAQLPSILENLRRNHQVRVVFLNADTNTLVQRFSETRRRHPLSTSAQQTQSATLIEAIDRERNLLEPLRAQAHSIDTSSLPAHALRSWIQDLLKDKPTGLTVVFESFGFKKGVPSEADLVFDVRCLPNPHYDKILRPLTGNDKPVKEFLEKIPEVISMECDIIQFIEKWLPHYIADGRSYLTVAIGCTGGQHRSVYLVNRISEHFRAQKDLIDLQLNFLDRHRELDSIPVTKL.

8 to 15 (GISGSGKS) contributes to the ATP binding site. 57-60 (DARR) lines the GTP pocket.

Belongs to the RapZ-like family.

Its function is as follows. Displays ATPase and GTPase activities. The polypeptide is Nucleotide-binding protein Pnuc_1915 (Polynucleobacter asymbioticus (strain DSM 18221 / CIP 109841 / QLW-P1DMWA-1) (Polynucleobacter necessarius subsp. asymbioticus)).